The following is a 362-amino-acid chain: 3-dehydroquinate synthase (362 aa).

NAD(+) is bound by residues 70–75 (DGEKYK), 104–108 (GVIGD), 128–129 (TT), lysine 141, and lysine 150. Zn(2+)-binding residues include glutamate 183, histidine 246, and histidine 263.

The protein belongs to the sugar phosphate cyclases superfamily. Dehydroquinate synthase family. The cofactor is Co(2+). Zn(2+) serves as cofactor. Requires NAD(+) as cofactor.

The protein resides in the cytoplasm. It catalyses the reaction 7-phospho-2-dehydro-3-deoxy-D-arabino-heptonate = 3-dehydroquinate + phosphate. It participates in metabolic intermediate biosynthesis; chorismate biosynthesis; chorismate from D-erythrose 4-phosphate and phosphoenolpyruvate: step 2/7. Functionally, catalyzes the conversion of 3-deoxy-D-arabino-heptulosonate 7-phosphate (DAHP) to dehydroquinate (DHQ). The sequence is that of 3-dehydroquinate synthase from Acinetobacter baylyi (strain ATCC 33305 / BD413 / ADP1).